Consider the following 564-residue polypeptide: E3 ubiquitin-protein ligase TRIM16 (564 aa).

Positions 1-70 are disordered; that stretch reads MAELDLMAPG…DPAEQGDPAG (70 aa). Residues 24-39 show a composition bias toward low complexity; it reads SPDSGSPSPDSGSASP. B box-type zinc fingers lie at residues 72 to 122 and 126 to 165; these read GKEV…LTEP and HNWR…IVSL. Ser-116 is subject to Phosphoserine. Zn(2+)-binding residues include Cys-131, His-134, Cys-153, and His-157. Coiled-coil stretches lie at residues 165–203, 243–274, and 320–340; these read LDAA…NQKS, AALS…RMAA, and HLIQ…KEEE. At Ser-203 the chain carries Phosphoserine. The region spanning 355 to 553 is the B30.2/SPRY domain; sequence YWTSKPEPST…RIVDLGEEPE (199 aa).

The protein belongs to the TRIM/RBCC family. As to quaternary structure, homodimerizes via its coiled-coil domain. Heterodimerizes with MID1, TRIM24 and PML. Interacts with Galectin-3/LGALS3 in a ULK1-dependent manner; this interaction mediates autophagy of damage endomembranes. Interacts with BECN1. Interacts with ATG16L1. Interacts with p62/SQSTM and LC3B/MAP1LC3B. Phosphorylated by ULK1. Post-translationally, auto-ubiquitinates via its B-Boxes.

It is found in the cytoplasm. The enzyme catalyses S-ubiquitinyl-[E2 ubiquitin-conjugating enzyme]-L-cysteine + [acceptor protein]-L-lysine = [E2 ubiquitin-conjugating enzyme]-L-cysteine + N(6)-ubiquitinyl-[acceptor protein]-L-lysine.. Its function is as follows. E3 ubiquitin ligase that plays an essential role in the organization of autophagic response and ubiquitination upon lysosomal and phagosomal damages. Plays a role in the stress-induced biogenesis and degradation of protein aggresomes by regulating the p62-KEAP1-NRF2 signaling and particularly by modulating the ubiquitination levels and thus stability of NRF2. Acts as a scaffold protein and facilitates autophagic degradation of protein aggregates by interacting with p62/SQSTM, ATG16L1 and LC3B/MAP1LC3B. In turn, protects the cell against oxidative stress-induced cell death as a consequence of endomembrane damage. The protein is E3 ubiquitin-protein ligase TRIM16 (TRIM16) of Pongo abelii (Sumatran orangutan).